Reading from the N-terminus, the 165-residue chain is Myosin regulatory light chain 2A, cardiac muscle isoform (165 aa).

Residue alanine 2 is modified to N,N,N-trimethylalanine. EF-hand domains lie at 24–59 (AQIQ…LGRL), 94–128 (DPEE…QEGR), and 129–164 (FSQE…GEEK). Positions 37, 39, 41, and 48 each coordinate Ca(2+).

In terms of assembly, myosin is a hexamer of 2 heavy chains and 4 light chains. In terms of processing, the N-terminus is blocked. N,N,N-trimethylalanine, found in other myosin light chains would not have been detected in the N-terminal tryptic peptide in PubMed:7319048 because it would remain trimethylated and ninhydrin negative after hydrolysis.

The sequence is that of Myosin regulatory light chain 2A, cardiac muscle isoform from Gallus gallus (Chicken).